The primary structure comprises 160 residues: Protein cornichon homolog 2 (160 aa).

Topologically, residues 1 to 10 (MAFTFAAFCY) are cytoplasmic. A helical transmembrane segment spans residues 11–31 (MLTLVLCASLIFFVIWHIIAF). At 32 to 72 (DELRTDFKNPIDQGNPARARERLKNIERICCLLRKLVVPEY) the chain is on the lumenal side. Residues 73-93 (SIHGLFCLMFLCAAEWVTLGL) form a helical membrane-spanning segment. Residues 94 to 138 (NIPLLFYHLWRYFHRPADGSEVMYDAVSIMNADILNYCQKESWCK) lie on the Cytoplasmic side of the membrane. A helical transmembrane segment spans residues 139–159 (LAFYLLSFFYYLYSMVYTLVS). Residue phenylalanine 160 is a topological domain, lumenal.

The protein belongs to the cornichon family. In terms of assembly, acts as an auxiliary subunit for AMPA-selective glutamate receptors (AMPARs). Found in a complex with GRIA1, GRIA2, GRIA3, GRIA4, CNIH3, CACNG2, CACNG3, CACNG4, CACNG5, CACNG7 and CACNG8. Interacts with CACGN8. Interacts with GRIA1. Found in a complex with GRIA1, GRIA2, GRIA3, GRIA4, DLG4 and CACNG8. As to expression, expression is up-regulated in dorsolateral prefrontal cortex of patients with schizophrenia (postmortem brain study).

It localises to the endoplasmic reticulum membrane. It is found in the postsynaptic cell membrane. The protein localises to the cell projection. The protein resides in the dendrite. Its subcellular location is the dendritic spine. It localises to the postsynaptic density. Regulates the trafficking and gating properties of AMPA-selective glutamate receptors (AMPARs). Promotes their targeting to the cell membrane and synapses and modulates their gating properties by regulating their rates of activation, deactivation and desensitization. Blocks CACNG8-mediated resensitization of AMPA receptors. This is Protein cornichon homolog 2 from Homo sapiens (Human).